Consider the following 286-residue polypeptide: Aquaporin PIP2-4 (286 aa).

2 consecutive transmembrane segments (helical) span residues 40–60 and 77–97; these read ALIA…ATVI and CGGV…FILV. Residues 109 to 111 carry the NPA 1 motif; it reads NPA. Transmembrane regions (helical) follow at residues 128-148, 170-190, and 204-224; these read LLYM…VKGF, GTGL…VFSA, and VLAP…TIPI. Positions 230 to 232 match the NPA 2 motif; sequence NPA. Residues 252–272 form a helical membrane-spanning segment; it reads IFWVGPFIGAAIAALYHQVIL.

Belongs to the MIP/aquaporin (TC 1.A.8) family. PIP (TC 1.A.8.11) subfamily. In terms of tissue distribution, expressed in roots.

The protein resides in the cell membrane. In terms of biological role, water channel required to facilitate the transport of water across cell membrane. May play a role in root water uptake. The protein is Aquaporin PIP2-4 (PIP2-4) of Oryza sativa subsp. japonica (Rice).